The sequence spans 469 residues: GTPase Der (469 aa).

EngA-type G domains are found at residues 30 to 193 (PVLA…PEVA) and 203 to 376 (RRVA…ASWD). Residues 36-43 (GRPNVGKS), 83-87 (DTGGW), 145-148 (NKVD), 209-216 (GKPNVGKS), 256-260 (DTAGL), and 321-324 (NKWD) each bind GTP. Positions 377-459 (TRIPTGPLNS…PIRINVRVRE (83 aa)) constitute a KH-like domain.

The protein belongs to the TRAFAC class TrmE-Era-EngA-EngB-Septin-like GTPase superfamily. EngA (Der) GTPase family. As to quaternary structure, associates with the 50S ribosomal subunit.

In terms of biological role, GTPase that plays an essential role in the late steps of ribosome biogenesis. The sequence is that of GTPase Der from Mycobacterium marinum (strain ATCC BAA-535 / M).